We begin with the raw amino-acid sequence, 255 residues long: Putative enoyl-CoA hydratase/isomerase YhaR (255 aa).

A run of 2 helical transmembrane segments spans residues 96 to 116 (VTIA…ALCA) and 126 to 146 (VLAM…HYLL).

The protein belongs to the enoyl-CoA hydratase/isomerase family.

The protein resides in the cell membrane. The sequence is that of Putative enoyl-CoA hydratase/isomerase YhaR (yhaR) from Bacillus subtilis (strain 168).